A 1067-amino-acid polypeptide reads, in one-letter code: MIDSSKKQQQQPPQHYSFADILSAGDLDPLKEKEWLDPGSQKSLKEVLQLRLQQRRTREQLVDQGIMPPLKSPAAFHEQIKSLERARTENFLKHKIRSRPNRSELVRMHILEETLAEPSLQATQLKLKRARLADDLNEKIAQRPGPLELVEKNILPVDLSVKEAITVSQTNLPENLDTLSFDEDSSDALSPEQPASQESQGSAASPGEMKTSDSSSPVSNTTIQCQTVSSPLPDFFKPVPTADLTTRSPLSCIVSKPGPALIKQTQPKHTEKPRSKKSKDPKPRVKKLKYHQYIPPDQKGEKIEEEMDSNYARLLQQQQLVLQLQILSQQHSTLTTSRKSYPAPLKSQKKQNTINTTICNGNAGAPPAQCSVNRQNSVPCKKTGPLPSSLDDMKVAELKMELKLRGLPVSGTKMDLIERLKPFQDFSSNGVSPSSANTVNITNPACNTTDDATTAFSTSALINSSSPTPSVSIGNNQTMLDGINSPLPMSPTPSEQSNFSSEDTNITDTFAEILTMMSPSQFMNTSPLKVNEDSMGATPGNTPNVELDAVEKDRKLQEKEKQIEELKRKLEQEQKLVEVLKKQLELEKRGQQQQPCSNVLLKMEPKHFNLQIKEETEAPDCQNSKQPVGSGGQILGQATAATISQNIIANNAVVIKHEVPLAKPEHQNVIQQFYVTSQRPPQTAVVAQPQALLATQTAQLLLPLSIKAANGVQLSMVQAQPHTVNPAPAQLSTAAATTTTLLSAPPKQSAPPTQDKFTPHLLNQNQQIRKLCPSATSGNVFSYPQNPVTAVPQSFSASISTSAQPQRSTQLTAVQNGPTSLHEKSSTPPQLQQFIVQQHPLFSSPTTKSKDPPRYEEAIKQARNNPASQPEVSNAHSQQMDDLFDILIKSGEMSPLIKEPSPISKMRPVTANVTTMPVNTVVSRPPPQIHMAPPLSLESTNSLSVSLESQLEAFLDGTLPSGNNIPHLESNSDDRETFSLIDDLNNDLLQNTAMLEHESTPMETTDTPFTANSCLSLDLADANLDNMEWLDLTMPNSSSSLTPLSSTLPSMFSTDFLDSNDLHLHWE.

RPEL repeat units lie at residues 46 to 71 (EVLQLRLQQRRTREQLVDQGIMPPLK), 90 to 115 (NFLKHKIRSRPNRSELVRMHILEETL), and 134 to 159 (DDLNEKIAQRPGPLELVEKNILPVDL). 2 disordered regions span residues 175–223 (NLDT…NTTI) and 249–286 (PLSCIVSKPGPALIKQTQPKHTEKPRSKKSKDPKPRVK). Polar residues-rich tracts occupy residues 193–203 (QPASQESQGSA) and 212–223 (SDSSSPVSNTTI). Residues 268 to 283 (KHTEKPRSKKSKDPKP) are compositionally biased toward basic and acidic residues. Positions 390-424 (LDDMKVAELKMELKLRGLPVSGTKMDLIERLKPFQ) constitute an SAP domain. Residues 540 to 594 (GNTPNVELDAVEKDRKLQEKEKQIEELKRKLEQEQKLVEVLKKQLELEKRGQQQQ) adopt a coiled-coil conformation. The span at 799 to 819 (ISTSAQPQRSTQLTAVQNGPT) shows a compositional bias: polar residues. The segment at 799-829 (ISTSAQPQRSTQLTAVQNGPTSLHEKSSTPP) is disordered.

Interacts with SRF.

The protein localises to the nucleus. In terms of biological role, poor transcriptional factor which uses the canonical single or multiple CArG boxes DNA sequence. Acts as a cofactor of serum response factor (SRF) with the potential to modulate SRF target genes. This is Myocardin-related transcription factor B (mrtfb) from Xenopus laevis (African clawed frog).